The chain runs to 477 residues: UDP-N-acetylmuramate--L-alanine ligase (477 aa).

Residue 112–118 coordinates ATP; the sequence is GTHGKTT.

The protein belongs to the MurCDEF family.

It localises to the cytoplasm. The enzyme catalyses UDP-N-acetyl-alpha-D-muramate + L-alanine + ATP = UDP-N-acetyl-alpha-D-muramoyl-L-alanine + ADP + phosphate + H(+). It participates in cell wall biogenesis; peptidoglycan biosynthesis. Functionally, cell wall formation. This chain is UDP-N-acetylmuramate--L-alanine ligase, found in Verminephrobacter eiseniae (strain EF01-2).